The sequence spans 185 residues: Large ribosomal subunit protein uL5 (185 aa).

This sequence belongs to the universal ribosomal protein uL5 family. In terms of assembly, part of the 50S ribosomal subunit; part of the 5S rRNA/L5/L18/L25 subcomplex. Contacts the 5S rRNA and the P site tRNA. Forms a bridge to the 30S subunit in the 70S ribosome.

In terms of biological role, this is one of the proteins that bind and probably mediate the attachment of the 5S RNA into the large ribosomal subunit, where it forms part of the central protuberance. In the 70S ribosome it contacts protein S13 of the 30S subunit (bridge B1b), connecting the 2 subunits; this bridge is implicated in subunit movement. Contacts the P site tRNA; the 5S rRNA and some of its associated proteins might help stabilize positioning of ribosome-bound tRNAs. The polypeptide is Large ribosomal subunit protein uL5 (Bartonella quintana (strain Toulouse) (Rochalimaea quintana)).